An 869-amino-acid chain; its full sequence is Speckle targeted PIP5K1A-regulated poly(A) polymerase (869 aa).

The segment at 16–46 (FRCCLCHVTTANRPSLDAHLGGRKHRHLVEL) adopts a Matrin-type zinc-finger fold. The RRM domain maps to 56–128 (RSVFVSGFPR…HRLRVRPREQ (73 aa)). A disordered region spans residues 111-147 (QPQHTLGGHRLRVRPREQKEFQSPASKSPKGAAPDSH). Serine 205 provides a ligand contact to ATP. 2 residues coordinate Mg(2+): aspartate 216 and aspartate 218. 2 residues coordinate UTP: aspartate 216 and aspartate 218. Residues 252–315 (QALACTPASP…PASPLQEDRG (64 aa)) are disordered. A compositionally biased stretch (pro residues) spans 259 to 269 (ASPPDSQPPSP). The span at 279 to 290 (TPSSSLAPQTPD) shows a compositional bias: polar residues. Residue asparagine 391 participates in ATP binding. Positions 391, 413, 431, and 548 each coordinate UTP. Positions 490–548 (LSSLLAQFFSCVSCWDLRGSLLSLREGQALPVAGDLPSNRWEGLRLGPMNLQDPFDLSH) constitute a PAP-associated domain. Residues 597-869 (SSPSSLLSAT…VFLPQALRNL (273 aa)) form a KA1; binds the bulging loops of U6 snRNA but is dispensable for terminal uridylyltransferase activity region. Composition is skewed to basic and acidic residues over residues 637 to 648 (GTKRLRSDRGGP) and 660 to 686 (LKLDGEEKSCEEGREEQQGYIRDHSED). Disordered regions lie at residues 637–686 (GTKR…HSED) and 720–755 (LATGEEGQSGHAALAEQGPKGPEAAREGSQGETGRG). A phosphoserine mark is found at serine 684 and serine 748.

This sequence belongs to the DNA polymerase type-B-like family. As to quaternary structure, associates with the cleavage and polyadenylation specificity factor (CPSF) complex. Interacts with CPSF1 and CPSF3; the interaction is direct. Interacts with PIP5K1A. It depends on Mg(2+) as a cofactor. Mn(2+) is required as a cofactor. In terms of processing, phosphorylated by CK1 in the proline-rich (Pro-rich) region.

Its subcellular location is the nucleus. It is found in the nucleolus. The protein resides in the nucleus speckle. The catalysed reaction is RNA(n) + UTP = RNA(n)-3'-uridine ribonucleotide + diphosphate. It carries out the reaction RNA(n) + ATP = RNA(n)-3'-adenine ribonucleotide + diphosphate. With respect to regulation, adenylyltransferase activity is specifically phosphatidylinositol 4,5-bisphosphate (PtdIns(4,5)P2). Its function is as follows. Poly(A) polymerase that creates the 3'-poly(A) tail of specific pre-mRNAs. Localizes to nuclear speckles together with PIP5K1A and mediates polyadenylation of a select set of mRNAs, such as HMOX1. In addition to polyadenylation, it is also required for the 3'-end cleavage of pre-mRNAs: binds to the 3'UTR of targeted pre-mRNAs and promotes the recruitment and assembly of the CPSF complex on the 3'UTR of pre-mRNAs. In addition to adenylyltransferase activity, also has uridylyltransferase activity. However, the ATP ratio is higher than UTP in cells, suggesting that it functions primarily as a poly(A) polymerase. Acts as a specific terminal uridylyltransferase for U6 snRNA in vitro: responsible for a controlled elongation reaction that results in the restoration of the four 3'-terminal UMP-residues found in newly transcribed U6 snRNA. Not involved in replication-dependent histone mRNA degradation. The protein is Speckle targeted PIP5K1A-regulated poly(A) polymerase (TUT1) of Ailuropoda melanoleuca (Giant panda).